The sequence spans 118 residues: MALYDLAHQLAREIKNSDEYTRYKELKDKIMSNEATKSMLLDFQKQQINIQSKQINGQTITDEEKEKFENIKELINLNSDIKEYLDAEYRMGVLFNDIQKILFGGLEIGITENEKSTR.

This sequence belongs to the UPF0342 family.

The chain is UPF0342 protein Hore_03100 from Halothermothrix orenii (strain H 168 / OCM 544 / DSM 9562).